The following is a 392-amino-acid chain: 8-amino-7-oxononanoate synthase (392 aa).

108-109 contributes to the pyridoxal 5'-phosphate binding site; it reads GF. His-133 is a substrate binding site. Residues Ser-180, 205–208, and 236–239 contribute to the pyridoxal 5'-phosphate site; these read DDAH and TLSK. The residue at position 239 (Lys-239) is an N6-(pyridoxal phosphate)lysine. Position 353 (Thr-353) interacts with substrate.

It belongs to the class-II pyridoxal-phosphate-dependent aminotransferase family. BioF subfamily. In terms of assembly, homodimer. Pyridoxal 5'-phosphate serves as cofactor.

It catalyses the reaction 6-carboxyhexanoyl-[ACP] + L-alanine + H(+) = (8S)-8-amino-7-oxononanoate + holo-[ACP] + CO2. Its pathway is cofactor biosynthesis; biotin biosynthesis. Functionally, catalyzes the decarboxylative condensation of pimeloyl-[acyl-carrier protein] and L-alanine to produce 8-amino-7-oxononanoate (AON), [acyl-carrier protein], and carbon dioxide. This is 8-amino-7-oxononanoate synthase from Bacillus pumilus (strain SAFR-032).